A 377-amino-acid polypeptide reads, in one-letter code: tRNA 2-selenouridine synthase (377 aa).

One can recognise a Rhodanese domain in the interval 18-141 (ITRGVTLIDV…LRQEAMDATD (124 aa)). The active-site S-selanylcysteine intermediate is the Cys101.

It belongs to the SelU family. As to quaternary structure, monomer.

It carries out the reaction 5-methylaminomethyl-2-thiouridine(34) in tRNA + selenophosphate + (2E)-geranyl diphosphate + H2O + H(+) = 5-methylaminomethyl-2-selenouridine(34) in tRNA + (2E)-thiogeraniol + phosphate + diphosphate. The catalysed reaction is 5-methylaminomethyl-2-thiouridine(34) in tRNA + (2E)-geranyl diphosphate = 5-methylaminomethyl-S-(2E)-geranyl-thiouridine(34) in tRNA + diphosphate. The enzyme catalyses 5-methylaminomethyl-S-(2E)-geranyl-thiouridine(34) in tRNA + selenophosphate + H(+) = 5-methylaminomethyl-2-(Se-phospho)selenouridine(34) in tRNA + (2E)-thiogeraniol. It catalyses the reaction 5-methylaminomethyl-2-(Se-phospho)selenouridine(34) in tRNA + H2O = 5-methylaminomethyl-2-selenouridine(34) in tRNA + phosphate. Functionally, involved in the post-transcriptional modification of the uridine at the wobble position (U34) of tRNA(Lys), tRNA(Glu) and tRNA(Gln). Catalyzes the conversion of 2-thiouridine (S2U-RNA) to 2-selenouridine (Se2U-RNA). Acts in a two-step process involving geranylation of 2-thiouridine (S2U) to S-geranyl-2-thiouridine (geS2U) and subsequent selenation of the latter derivative to 2-selenouridine (Se2U) in the tRNA chain. The sequence is that of tRNA 2-selenouridine synthase from Cronobacter sakazakii (strain ATCC BAA-894) (Enterobacter sakazakii).